The chain runs to 261 residues: Cytochrome c oxidase subunit 3 (261 aa).

Topologically, residues 1-15 (MTHQTHAYHMVNPSP) are mitochondrial matrix. Residues 16–34 (WPLTGALSALLMTSGLIMW) form a helical membrane-spanning segment. The Mitochondrial intermembrane segment spans residues 35–40 (FHFNST). A helical transmembrane segment spans residues 41–66 (ALLMLGLTTNMLTMYQWWRDIIREST). The Mitochondrial matrix portion of the chain corresponds to 67-72 (FQGHHT). Residues 73 to 105 (PVVQKGLRYGMILFIISEVLFFTGFFWAFYHSS) traverse the membrane as a helical segment. Topologically, residues 106 to 128 (LAPTPELGGCWPPTGINPLNPLE) are mitochondrial intermembrane. A helical transmembrane segment spans residues 129–152 (VPLLNTSVLLASGVSITWAHHSLM). Over 153–155 (EGN) the chain is Mitochondrial matrix. Residues 156-183 (RSHMLQALFITITLGVYFTLLQASEYYE) traverse the membrane as a helical segment. Residues 184–190 (APFTISD) are Mitochondrial intermembrane-facing. A helical membrane pass occupies residues 191–223 (GVYGSTFFVATGFHGLHVIIGSTFLIVCFFRQL). Topologically, residues 224–232 (KFHFTSNHH) are mitochondrial matrix. A helical membrane pass occupies residues 233 to 256 (FGFEAAAWYWHFVDVVWLFLYVSI). Topologically, residues 257-261 (YWWGS) are mitochondrial intermembrane.

Belongs to the cytochrome c oxidase subunit 3 family. Component of the cytochrome c oxidase (complex IV, CIV), a multisubunit enzyme composed of 14 subunits. The complex is composed of a catalytic core of 3 subunits MT-CO1, MT-CO2 and MT-CO3, encoded in the mitochondrial DNA, and 11 supernumerary subunits COX4I, COX5A, COX5B, COX6A, COX6B, COX6C, COX7A, COX7B, COX7C, COX8 and NDUFA4, which are encoded in the nuclear genome. The complex exists as a monomer or a dimer and forms supercomplexes (SCs) in the inner mitochondrial membrane with NADH-ubiquinone oxidoreductase (complex I, CI) and ubiquinol-cytochrome c oxidoreductase (cytochrome b-c1 complex, complex III, CIII), resulting in different assemblies (supercomplex SCI(1)III(2)IV(1) and megacomplex MCI(2)III(2)IV(2)).

It localises to the mitochondrion inner membrane. The catalysed reaction is 4 Fe(II)-[cytochrome c] + O2 + 8 H(+)(in) = 4 Fe(III)-[cytochrome c] + 2 H2O + 4 H(+)(out). In terms of biological role, component of the cytochrome c oxidase, the last enzyme in the mitochondrial electron transport chain which drives oxidative phosphorylation. The respiratory chain contains 3 multisubunit complexes succinate dehydrogenase (complex II, CII), ubiquinol-cytochrome c oxidoreductase (cytochrome b-c1 complex, complex III, CIII) and cytochrome c oxidase (complex IV, CIV), that cooperate to transfer electrons derived from NADH and succinate to molecular oxygen, creating an electrochemical gradient over the inner membrane that drives transmembrane transport and the ATP synthase. Cytochrome c oxidase is the component of the respiratory chain that catalyzes the reduction of oxygen to water. Electrons originating from reduced cytochrome c in the intermembrane space (IMS) are transferred via the dinuclear copper A center (CU(A)) of subunit 2 and heme A of subunit 1 to the active site in subunit 1, a binuclear center (BNC) formed by heme A3 and copper B (CU(B)). The BNC reduces molecular oxygen to 2 water molecules using 4 electrons from cytochrome c in the IMS and 4 protons from the mitochondrial matrix. The protein is Cytochrome c oxidase subunit 3 (MT-CO3) of Syncerus caffer (African buffalo).